We begin with the raw amino-acid sequence, 364 residues long: Dihydroorotate dehydrogenase (quinone) (364 aa).

FMN contacts are provided by residues 61–65 and Thr85; that span reads AGFDK. Residue Lys65 coordinates substrate. 110-114 contacts substrate; it reads NRMGF. Asn139 and Asn170 together coordinate FMN. Residue Asn170 coordinates substrate. Ser173 functions as the Nucleophile in the catalytic mechanism. Asn175 lines the substrate pocket. The FMN site is built by Lys214 and Ala242. Residue 243-244 participates in substrate binding; it reads NT. Residues Gly266, Gly295, and 316-317 contribute to the FMN site; that span reads YS.

Belongs to the dihydroorotate dehydrogenase family. Type 2 subfamily. Monomer. FMN serves as cofactor.

It localises to the cell membrane. The catalysed reaction is (S)-dihydroorotate + a quinone = orotate + a quinol. It participates in pyrimidine metabolism; UMP biosynthesis via de novo pathway; orotate from (S)-dihydroorotate (quinone route): step 1/1. In terms of biological role, catalyzes the conversion of dihydroorotate to orotate with quinone as electron acceptor. In Rhodopseudomonas palustris (strain ATCC BAA-98 / CGA009), this protein is Dihydroorotate dehydrogenase (quinone).